A 106-amino-acid chain; its full sequence is Iron-sulfur cluster assembly protein CyaY (106 aa).

The protein belongs to the frataxin family.

In terms of biological role, involved in iron-sulfur (Fe-S) cluster assembly. May act as a regulator of Fe-S biogenesis. The protein is Iron-sulfur cluster assembly protein CyaY of Salmonella newport (strain SL254).